The sequence spans 354 residues: Arginase-2, mitochondrial (354 aa).

The transit peptide at 1–22 (MSLRGSLSRLLQTRVHSILKKS) directs the protein to the mitochondrion. The Mn(2+) site is built by H120, D143, H145, and D147. Residues 145–149 (HADIN), 156–158 (SGN), and D202 contribute to the substrate site. Residues D251 and D253 each contribute to the Mn(2+) site. 2 residues coordinate substrate: T265 and E296. Residues 334–354 (YDQLPTPSSPDESENQARVRI) are disordered.

It belongs to the arginase family. In terms of assembly, homotrimer. Requires Mn(2+) as cofactor. As to expression, expressed most strongly in kidney and prostate, much less strongly in the brain, skeletal muscle, placenta, lung, mammary gland, macrophage, uterus, testis and gut, but apparently not in the liver, heart and pancreas. Expressed in activated T cells.

It is found in the mitochondrion. The catalysed reaction is L-arginine + H2O = urea + L-ornithine. It participates in nitrogen metabolism; urea cycle; L-ornithine and urea from L-arginine: step 1/1. Its function is as follows. May play a role in the regulation of extra-urea cycle arginine metabolism and also in down-regulation of nitric oxide synthesis. Extrahepatic arginase functions to regulate L-arginine bioavailability to nitric oxid synthase (NOS). Arginine metabolism is a critical regulator of innate and adaptive immune responses. Seems to be involved in negative regulation of the survival capacity of activated CD4(+) and CD8(+) T cells. May suppress inflammation-related signaling in asthmatic airway epithelium. May contribute to the immune evasion of H.pylori by restricting M1 macrophage activation and polyamine metabolism. In fetal dendritic cells may play a role in promoting immune suppression and T cell TNF-alpha production during gestation. Regulates RPS6KB1 signaling, which promotes endothelial cell senescence and inflammation and implicates NOS3/eNOS dysfunction. Can inhibit endothelial autophagy independently of its enzymatic activity implicating mTORC2 signaling. Involved in vascular smooth muscle cell senescence and apoptosis independently of its enzymatic activity. Since NOS is found in the penile corpus cavernosum smooth muscle, the clitoral corpus cavernosum and the vagina, arginase-2 plays a role in both male and female sexual arousal. In Homo sapiens (Human), this protein is Arginase-2, mitochondrial (ARG2).